We begin with the raw amino-acid sequence, 232 residues long: Small ribosomal subunit protein uS3 (232 aa).

One can recognise a KH type-2 domain in the interval 39–107; sequence VRQFLTKELQ…PAQINIAEVR (69 aa). The disordered stretch occupies residues 213–232; the sequence is AANAVEPKGDKPKKQRKGRK.

The protein belongs to the universal ribosomal protein uS3 family. Part of the 30S ribosomal subunit. Forms a tight complex with proteins S10 and S14.

Its function is as follows. Binds the lower part of the 30S subunit head. Binds mRNA in the 70S ribosome, positioning it for translation. The polypeptide is Small ribosomal subunit protein uS3 (Vibrio campbellii (strain ATCC BAA-1116)).